The primary structure comprises 363 residues: Type-1 angiotensin II receptor B (363 aa).

Residues 1–27 (MLSNISAGENSEVEKIVVKCSKSGMHN) lie on the Extracellular side of the membrane. N-linked (GlcNAc...) asparagine glycosylation is present at Asn4. Disulfide bonds link Cys20–Cys274 and Cys103–Cys182. Residues 28–57 (YIFITIPIIYSTIFVVGVFGNSLVVIVIYS) form a helical membrane-spanning segment. Topologically, residues 58–63 (YMKMKT) are cytoplasmic. A helical membrane pass occupies residues 64-91 (MASVFLMNLALSDLCFVITLPLWAVYTA). Over 92–100 (MHYHWPFGD) the chain is Extracellular. A helical membrane pass occupies residues 101 to 127 (LLCKIASTAITLNLYTTVFLLTCLSID). Topologically, residues 128–143 (RYSAIVHPMKSRIRRT) are cytoplasmic. Residues 144–167 (VMVARLTCVGIWLVAFLASLPSVI) traverse the membrane as a helical segment. At 168–192 (YRQIFIFPDTNQTVCALVYHSGHIY) the chain is on the extracellular side. Arg169 contributes to the angiotensin II binding site. Asn178 carries N-linked (GlcNAc...) asparagine glycosylation. 2 residues coordinate angiotensin II: Tyr186 and Lys201. The chain crosses the membrane as a helical span at residues 193-218 (FMVGMSLVKNIVGFFIPFVIILTSYT). The Cytoplasmic segment spans residues 219–239 (LIGKTLKEVYRAQRARNDDIF). A helical transmembrane segment spans residues 240 to 268 (KMIVAVVLLFFFCWIPHQVFTFLDVLIQM). The Extracellular portion of the chain corresponds to 269–278 (DVIQNCKMYD). A helical transmembrane segment spans residues 279-304 (IVDTGMPITICIAYFNSCLNPFLYGF). Residues 305–363 (FGKKFRKHFLQLIKYIPPKMRTHASVNTKSSTVSQRLSDTKCASNKIALWIFDIEEHCK) are Cytoplasmic-facing. Residues Cys346 and Cys362 are each lipidated (S-palmitoyl cysteine).

It belongs to the G-protein coupled receptor 1 family. In terms of processing, C-terminal Ser or Thr residues may be phosphorylated. Heart membranes, follicular oocytes.

Its subcellular location is the cell membrane. Functionally, receptor for angiotensin II, a vasoconstricting peptide, which acts as a key regulator of blood pressure and sodium retention by the kidney. The activated receptor in turn couples to G-alpha proteins G(q) (GNAQ, GNA11, GNA14 or GNA15) and thus activates phospholipase C and increases the cytosolic Ca(2+) concentrations, which in turn triggers cellular responses such as stimulation of protein kinase C. The protein is Type-1 angiotensin II receptor B (agtr1-b) of Xenopus laevis (African clawed frog).